A 280-amino-acid chain; its full sequence is Thylakoid lumenal protein TL20.3, chloroplastic (280 aa).

Residues 1–59 (MAFSSLSPLPMKSLDISRSSSSVSRSPYHFQRYLLRRLQLSSRSNLEIKDSSNTREGCC) constitute a chloroplast transit peptide. Residues 60-90 (SSAESNTWKRILSAAMAAAVIASSSGVPAMA) constitute a thylakoid transit peptide. Pentapeptide repeat domains follow at residues 124-163 (ENFR…NFSG) and 169-208 (TLMD…DFSD).

As to quaternary structure, interacts with thioredoxin. Interacts in vitro with LTO1.

It localises to the plastid. The protein localises to the chloroplast thylakoid lumen. In terms of biological role, pentapeptide repeat protein of unknown function. Subject to degradation when reduced. The protein is Thylakoid lumenal protein TL20.3, chloroplastic of Arabidopsis thaliana (Mouse-ear cress).